The sequence spans 75 residues: Large ribosomal subunit protein bL28 (75 aa).

It belongs to the bacterial ribosomal protein bL28 family.

This Baumannia cicadellinicola subsp. Homalodisca coagulata protein is Large ribosomal subunit protein bL28.